A 212-amino-acid chain; its full sequence is High frequency lysogenization protein HflD homolog (212 aa).

A coiled-coil region spans residues 92-128 (LIALERKLNAKSAALDELGKRIGQLERQLEHFELLSE).

The protein belongs to the HflD family.

It localises to the cytoplasm. It is found in the cell inner membrane. This Pectobacterium atrosepticum (strain SCRI 1043 / ATCC BAA-672) (Erwinia carotovora subsp. atroseptica) protein is High frequency lysogenization protein HflD homolog.